Reading from the N-terminus, the 364-residue chain is Histidinol-phosphate aminotransferase (364 aa).

K226 carries the N6-(pyridoxal phosphate)lysine modification.

Belongs to the class-II pyridoxal-phosphate-dependent aminotransferase family. Histidinol-phosphate aminotransferase subfamily. As to quaternary structure, homodimer. Pyridoxal 5'-phosphate is required as a cofactor.

The enzyme catalyses L-histidinol phosphate + 2-oxoglutarate = 3-(imidazol-4-yl)-2-oxopropyl phosphate + L-glutamate. Its pathway is amino-acid biosynthesis; L-histidine biosynthesis; L-histidine from 5-phospho-alpha-D-ribose 1-diphosphate: step 7/9. This chain is Histidinol-phosphate aminotransferase, found in Campylobacter jejuni subsp. jejuni serotype O:2 (strain ATCC 700819 / NCTC 11168).